The following is a 232-amino-acid chain: U-scoloptoxin(11)-Sa3a (232 aa).

Residues 1–21 (MFQFCLLILLLAPGRFFSALG) form the signal peptide.

This sequence belongs to the scoloptoxin-11 family. In terms of processing, contains 8 disulfide bonds. In terms of tissue distribution, expressed by the venom gland.

The protein localises to the secreted. In Scolopendra alternans (Florida Keys giant centipede), this protein is U-scoloptoxin(11)-Sa3a.